We begin with the raw amino-acid sequence, 930 residues long: Isoleucine--tRNA ligase (930 aa).

Positions 57-67 match the 'HIGH' region motif; sequence PYANGNIHVGH. Glutamate 554 serves as a coordination point for L-isoleucyl-5'-AMP. Positions 595–599 match the 'KMSKS' region motif; the sequence is KMSKS. Lysine 598 provides a ligand contact to ATP. Positions 888, 891, 908, and 911 each coordinate Zn(2+).

The protein belongs to the class-I aminoacyl-tRNA synthetase family. IleS type 1 subfamily. Monomer. Zn(2+) is required as a cofactor.

The protein localises to the cytoplasm. The enzyme catalyses tRNA(Ile) + L-isoleucine + ATP = L-isoleucyl-tRNA(Ile) + AMP + diphosphate. In terms of biological role, catalyzes the attachment of isoleucine to tRNA(Ile). As IleRS can inadvertently accommodate and process structurally similar amino acids such as valine, to avoid such errors it has two additional distinct tRNA(Ile)-dependent editing activities. One activity is designated as 'pretransfer' editing and involves the hydrolysis of activated Val-AMP. The other activity is designated 'posttransfer' editing and involves deacylation of mischarged Val-tRNA(Ile). The sequence is that of Isoleucine--tRNA ligase from Streptococcus pneumoniae (strain ATCC BAA-255 / R6).